The following is a 226-amino-acid chain: V-type proton ATPase subunit E 2 (226 aa).

It belongs to the V-ATPase E subunit family. In terms of assembly, V-ATPase is a heteromultimeric enzyme made up of two complexes: the ATP-hydrolytic V1 complex and the proton translocation V0 complex. The V1 complex consists of three catalytic AB heterodimers that form a heterohexamer, three peripheral stalks each consisting of EG heterodimers, one central rotor including subunits D and F, and the regulatory subunits C and H. The proton translocation complex V0 consists of the proton transport subunit a, a ring of proteolipid subunits c9c'', rotary subunit d, subunits e and f, and the accessory subunits ATP6AP1/Ac45 and ATP6AP2/PRR.

Subunit of the V1 complex of vacuolar(H+)-ATPase (V-ATPase), a multisubunit enzyme composed of a peripheral complex (V1) that hydrolyzes ATP and a membrane integral complex (V0) that translocates protons. V-ATPase is responsible for acidifying and maintaining the pH of intracellular compartments and in some cell types, is targeted to the plasma membrane, where it is responsible for acidifying the extracellular environment. The chain is V-type proton ATPase subunit E 2 (ATP6V1E2) from Bos taurus (Bovine).